The primary structure comprises 191 residues: Putative inactive glutathione hydrolase 4 (191 aa).

Catalysis depends on T54, which acts as the Nucleophile. L-glutamate contacts are provided by residues T72, N74, E93, D96, 126 to 127, and 147 to 148; these read SS and GG.

It belongs to the gamma-glutamyltransferase family. As to expression, expressed at low levels in embryo, roots and leaves. In mature plants, expression is restricted to vascular tissues of roots, leaves, flowers and siliques.

This Arabidopsis thaliana (Mouse-ear cress) protein is Putative inactive glutathione hydrolase 4 (GGT4).